A 199-amino-acid chain; its full sequence is Recombination protein RecR (199 aa).

The C4-type zinc finger occupies 56–71; sequence CQVCFHLSAESTCEIC. Positions 79-173 constitute a Toprim domain; the sequence is QTLCVVADSR…KVTRIAFGLP (95 aa).

It belongs to the RecR family.

Functionally, may play a role in DNA repair. It seems to be involved in an RecBC-independent recombinational process of DNA repair. It may act with RecF and RecO. In Gloeothece citriformis (strain PCC 7424) (Cyanothece sp. (strain PCC 7424)), this protein is Recombination protein RecR.